The following is a 418-amino-acid chain: Tyrosine--tRNA ligase (418 aa).

Residue tyrosine 34 coordinates L-tyrosine. Positions 39–48 (PTADSLHLGH) match the 'HIGH' region motif. L-tyrosine contacts are provided by tyrosine 169 and glutamine 173. A 'KMSKS' region motif is present at residues 229-233 (KFGKS). Lysine 232 is a binding site for ATP. An S4 RNA-binding domain is found at 352 to 418 (LNLVDMLVTA…GKKKYAVLTY (67 aa)).

Belongs to the class-I aminoacyl-tRNA synthetase family. TyrS type 1 subfamily. As to quaternary structure, homodimer.

It localises to the cytoplasm. The catalysed reaction is tRNA(Tyr) + L-tyrosine + ATP = L-tyrosyl-tRNA(Tyr) + AMP + diphosphate + H(+). Its function is as follows. Catalyzes the attachment of tyrosine to tRNA(Tyr) in a two-step reaction: tyrosine is first activated by ATP to form Tyr-AMP and then transferred to the acceptor end of tRNA(Tyr). This chain is Tyrosine--tRNA ligase, found in Streptococcus pyogenes serotype M28 (strain MGAS6180).